A 187-amino-acid chain; its full sequence is Accessory gene regulator protein B (187 aa).

5 consecutive transmembrane segments (helical) span residues 49–69 (ISIF…YMLI), 82–102 (ILCY…LINI), 106–126 (FTYL…YAPA), 144–164 (VSII…PFYA), and 166–186 (FMLL…FPKE).

This sequence belongs to the AgrB family.

It is found in the cell membrane. Functionally, essential for the production of a quorum sensing system signal molecule, the autoinducing peptide (AIP). This quorum sensing system is responsible for the regulation of the expression of virulence factor genes. Involved in the proteolytic processing of AgrD, the precursor of AIP. The polypeptide is Accessory gene regulator protein B (Staphylococcus aureus (strain bovine RF122 / ET3-1)).